We begin with the raw amino-acid sequence, 300 residues long: Ribosomal RNA small subunit methyltransferase H (300 aa).

S-adenosyl-L-methionine is bound by residues 46 to 48 (GGH), aspartate 65, phenylalanine 92, aspartate 107, and glutamine 114.

This sequence belongs to the methyltransferase superfamily. RsmH family.

It localises to the cytoplasm. It carries out the reaction cytidine(1402) in 16S rRNA + S-adenosyl-L-methionine = N(4)-methylcytidine(1402) in 16S rRNA + S-adenosyl-L-homocysteine + H(+). Its function is as follows. Specifically methylates the N4 position of cytidine in position 1402 (C1402) of 16S rRNA. In Prochlorococcus marinus subsp. pastoris (strain CCMP1986 / NIES-2087 / MED4), this protein is Ribosomal RNA small subunit methyltransferase H.